The chain runs to 622 residues: Chaperone protein HtpG (622 aa).

The interval 1 to 322 is a; substrate-binding; the sequence is MTEAKNYEFQ…SEDLPLNISR (322 aa). The b stretch occupies residues 323–539; it reads QSLQDNALVS…DGFMSASMER (217 aa). Positions 540–622 are c; it reads VLAASRKEQG…KILDRAVSRA (83 aa).

It belongs to the heat shock protein 90 family. As to quaternary structure, homodimer.

It is found in the cytoplasm. Its function is as follows. Molecular chaperone. Has ATPase activity. The protein is Chaperone protein HtpG of Desulfotalea psychrophila (strain LSv54 / DSM 12343).